We begin with the raw amino-acid sequence, 98 residues long: Large ribosomal subunit protein bL27 (98 aa).

The propeptide occupies 1–13 (MKKIWFHLDLQFF).

This sequence belongs to the bacterial ribosomal protein bL27 family. Post-translationally, the N-terminus is cleaved by ribosomal processing cysteine protease Prp.

This Mycoplasmoides gallisepticum (strain R(low / passage 15 / clone 2)) (Mycoplasma gallisepticum) protein is Large ribosomal subunit protein bL27.